Here is a 296-residue protein sequence, read N- to C-terminus: MRHKELLSKTFQGPAVVCRTPTSHVYMFKNGSGDSGDASEEESHRVVLRPRGKELQKSGVHQPHQAGAGDVVLLQRELAQEDSLNKLALQYGCKVADIKKVNNFIREQDLYALKSIKSPVKNHGILTETHKELKPLLSPSSETTVTVELPDADRAGAGTDAQASQLMDFFKGIDQDIECAVQSEIFLHESYCIDTSHQPLLPAPPKTPMDGADCGIQWWNAVFIMLLIGIVLPIFYLVYFKIQASGETPNSLNTAAIPNGSMAMGTVPGQAPRLAVAVPTVPSADSQFSQTTQAGN.

Residues M1–Q217 are Extracellular-facing. N30 is a glycosylation site (N-linked (GlcNAc...) asparagine). In terms of domain architecture, LysM spans L74–S118. Residues W218–V238 form a helical membrane-spanning segment. Residues Y239–N296 are Cytoplasmic-facing.

It localises to the membrane. The sequence is that of LysM and putative peptidoglycan-binding domain-containing protein 4 (LYSMD4) from Pongo abelii (Sumatran orangutan).